Consider the following 885-residue polypeptide: Alanine--tRNA ligase (885 aa).

Zn(2+)-binding residues include H571, H575, C674, and H678.

The protein belongs to the class-II aminoacyl-tRNA synthetase family. Zn(2+) serves as cofactor.

The protein resides in the cytoplasm. The enzyme catalyses tRNA(Ala) + L-alanine + ATP = L-alanyl-tRNA(Ala) + AMP + diphosphate. Catalyzes the attachment of alanine to tRNA(Ala) in a two-step reaction: alanine is first activated by ATP to form Ala-AMP and then transferred to the acceptor end of tRNA(Ala). Also edits incorrectly charged Ser-tRNA(Ala) and Gly-tRNA(Ala) via its editing domain. The chain is Alanine--tRNA ligase from Clavibacter michiganensis subsp. michiganensis (strain NCPPB 382).